A 132-amino-acid polypeptide reads, in one-letter code: Peptide methionine sulfoxide reductase MsrB (132 aa).

The MsrB domain occupies 9 to 131 (DAQWRAELSP…NSASLSFHPK (123 aa)). 4 residues coordinate Zn(2+): cysteine 48, cysteine 51, cysteine 97, and cysteine 100. Catalysis depends on cysteine 120, which acts as the Nucleophile.

Belongs to the MsrB Met sulfoxide reductase family. The cofactor is Zn(2+).

It carries out the reaction L-methionyl-[protein] + [thioredoxin]-disulfide + H2O = L-methionyl-(R)-S-oxide-[protein] + [thioredoxin]-dithiol. The sequence is that of Peptide methionine sulfoxide reductase MsrB from Thiobacillus denitrificans (strain ATCC 25259 / T1).